A 206-amino-acid polypeptide reads, in one-letter code: Large ribosomal subunit protein uL4 (206 aa).

The disordered stretch occupies residues 48-97 (THAVKNRSLVSGGGKKPWKQKHTGRARQGSTRASQWVGGGKAMGPKPRDY). Residues 63–72 (KPWKQKHTGR) show a composition bias toward basic residues.

Belongs to the universal ribosomal protein uL4 family. In terms of assembly, part of the 50S ribosomal subunit.

One of the primary rRNA binding proteins, this protein initially binds near the 5'-end of the 23S rRNA. It is important during the early stages of 50S assembly. It makes multiple contacts with different domains of the 23S rRNA in the assembled 50S subunit and ribosome. Its function is as follows. Forms part of the polypeptide exit tunnel. The chain is Large ribosomal subunit protein uL4 from Anaeromyxobacter dehalogenans (strain 2CP-C).